The primary structure comprises 221 residues: MHGVVVVELKGYREWTESLGPRREHIIQQVQSRIQAAVWRSFTAVGALPHHFRYDFYIALVNGVSLDLVKRAVEKAARASPVGAGFCLGVGETPYEAYLRCGGGGGGAASPAVVAHMDVINSTEATRRNGPLDVYLKVVKLLGQLGERCKDLGCMAFYLGGDNIALFLPSPNAIYSILDGVDLRVRVGVGVAKRPYNAFVRATWALDRLRSAGREGVEVVK.

This sequence belongs to the archaeal-type GTP cyclohydrolase family.

It carries out the reaction GTP + 3 H2O = 2-amino-5-formylamino-6-(5-phospho-D-ribosylamino)pyrimidin-4(3H)-one + 2 phosphate + 2 H(+). Catalyzes the formation of 2-amino-5-formylamino-6-ribofuranosylamino-4(3H)-pyrimidinone ribonucleotide monophosphate and inorganic phosphate from GTP. Also has an independent pyrophosphate phosphohydrolase activity. The sequence is that of GTP cyclohydrolase III from Pyrobaculum neutrophilum (strain DSM 2338 / JCM 9278 / NBRC 100436 / V24Sta) (Thermoproteus neutrophilus).